Here is a 637-residue protein sequence, read N- to C-terminus: Conglutin beta 5 (637 aa).

Residues 1–30 form the signal peptide; that stretch reads MAKMRVRFPMLVLLLGVVFLLAVSIGIAYG. Basic and acidic residues-rich tracts occupy residues 33-105, 136-174, and 184-203; these read DVIK…REQE, RREE…REQE, and DYGR…REQE. Disordered stretches follow at residues 33 to 221 and 384 to 439; these read DVIK…YFSS and EQED…LRSN. The Cupin type-1 1 domain maps to 217-375; sequence YYFSSERFQT…TFNTHYEEIQ (159 aa). Positions 389 to 417 are enriched in basic and acidic residues; it reads EQRREQEQSHQDEGVIVRVSKEQIQELRK. One can recognise a Cupin type-1 2 domain in the interval 434-594; it reads FNLRSNEPIY…IFPGSAEDVE (161 aa). Asn-544 is a glycosylation site (N-linked (GlcNAc...) asparagine). Residues 606-615 are compositionally biased toward low complexity; sequence ANAQPQQQQQ. The tract at residues 606–626 is disordered; it reads ANAQPQQQQQQREKEGRRGRR.

This sequence belongs to the 7S seed storage protein family. In terms of assembly, component of globulins complexes which accumulate in seeds.

Functionally, seed storage protein. Accumulates during seed development and is hydrolyzed after germination to provide a carbon and nitrogen source for the developing seedling. The polypeptide is Conglutin beta 5 (Lupinus angustifolius (Narrow-leaved blue lupine)).